We begin with the raw amino-acid sequence, 120 residues long: Large ribosomal subunit protein uL18 (120 aa).

Belongs to the universal ribosomal protein uL18 family. As to quaternary structure, part of the 50S ribosomal subunit; part of the 5S rRNA/L5/L18/L25 subcomplex. Contacts the 5S and 23S rRNAs.

In terms of biological role, this is one of the proteins that bind and probably mediate the attachment of the 5S RNA into the large ribosomal subunit, where it forms part of the central protuberance. In Janthinobacterium sp. (strain Marseille) (Minibacterium massiliensis), this protein is Large ribosomal subunit protein uL18.